Consider the following 324-residue polypeptide: Serpentine receptor class gamma-10 (324 aa).

The next 8 membrane-spanning stretches (helical) occupy residues 39–59, 69–89, 91–111, 128–146, 155–175, 206–226, 246–266, and 279–299; these read SSYLIVGAVLNVMIVYTVFHG, MLYCADAIVGIYINTAEVIFG, IFIYITPLCPIASPYFFTPSI, TFSQIFMSFNRMTCVIFLM, ILKPVLIITFILPLGVIWKIL, LFHFTLCFVLVIIFFVATILG, MIMAVQTVTFASIQIYFVFFA, and IVSFVFDSLYVFSPIALIVMS.

Belongs to the nematode receptor-like protein srg family.

Its subcellular location is the membrane. The protein is Serpentine receptor class gamma-10 (srg-10) of Caenorhabditis elegans.